We begin with the raw amino-acid sequence, 570 residues long: Urease subunit alpha (570 aa).

The Urease domain occupies 131 to 570 (GGMDSHIHFI…LPMAQRYFLF (440 aa)). Residues His-136, His-138, and Lys-219 each coordinate Ni(2+). Lys-219 is modified (N6-carboxylysine). Position 221 (His-221) interacts with substrate. Residues His-248 and His-274 each coordinate Ni(2+). Catalysis depends on His-322, which acts as the Proton donor. Residue Asp-362 participates in Ni(2+) binding.

Belongs to the metallo-dependent hydrolases superfamily. Urease alpha subunit family. In terms of assembly, heterotrimer of UreA (gamma), UreB (beta) and UreC (alpha) subunits. Three heterotrimers associate to form the active enzyme. Ni cation serves as cofactor. Post-translationally, carboxylation allows a single lysine to coordinate two nickel ions.

Its subcellular location is the cytoplasm. The catalysed reaction is urea + 2 H2O + H(+) = hydrogencarbonate + 2 NH4(+). It participates in nitrogen metabolism; urea degradation; CO(2) and NH(3) from urea (urease route): step 1/1. This Sinorhizobium medicae (strain WSM419) (Ensifer medicae) protein is Urease subunit alpha.